The chain runs to 367 residues: MNTTANPSNIIVGLSGGVDSSVTAALLKQQGYQVRGVFMQNWEDDDNDEYCSIKQDSFDAIAVADIIGIDIDIVNFAAQYKDKVFAYFLQEYSAGRTPNPDVLCNAEIKFKCFLDYAVGQGADTIATGHYARKEVRNGVHYLLKGLDRNKDQSYFLYRLKPFQLERAIFPLGGLEKPEVRRLAAEFKLPTAAKKDSTGICFIGERPFREFLQKYLPTDNGKMVTPEGKTVGEHVGLMFYTLGQRKGLGIGGAGEPWFVAAKDLTKNELIVVQGHDHPLLYTRSLVMNDLSFTLPERPKAGRYTCKTRYRMADAPCELRYLDDETAELVFDEPQWAVTPGQSAVLYDGDICLGGGIIQTTDKPVIITR.

ATP-binding positions include 13-20 (GLSGGVDS) and M39. Residues 99 to 101 (NPD) form an interaction with target base in tRNA region. The active-site Nucleophile is the C104. C104 and C200 are disulfide-bonded. G128 is an ATP binding site. The segment at 150–152 (KDQ) is interaction with tRNA. C200 functions as the Cysteine persulfide intermediate in the catalytic mechanism. The segment at 307–308 (RY) is interaction with tRNA.

Belongs to the MnmA/TRMU family.

Its subcellular location is the cytoplasm. It carries out the reaction S-sulfanyl-L-cysteinyl-[protein] + uridine(34) in tRNA + AH2 + ATP = 2-thiouridine(34) in tRNA + L-cysteinyl-[protein] + A + AMP + diphosphate + H(+). In terms of biological role, catalyzes the 2-thiolation of uridine at the wobble position (U34) of tRNA, leading to the formation of s(2)U34. This chain is tRNA-specific 2-thiouridylase MnmA, found in Neisseria meningitidis serogroup B (strain ATCC BAA-335 / MC58).